The chain runs to 337 residues: Tetraacyldisaccharide 4'-kinase (337 aa).

58–65 (TVGGSGKT) lines the ATP pocket.

It belongs to the LpxK family.

The enzyme catalyses a lipid A disaccharide + ATP = a lipid IVA + ADP + H(+). Its pathway is glycolipid biosynthesis; lipid IV(A) biosynthesis; lipid IV(A) from (3R)-3-hydroxytetradecanoyl-[acyl-carrier-protein] and UDP-N-acetyl-alpha-D-glucosamine: step 6/6. In terms of biological role, transfers the gamma-phosphate of ATP to the 4'-position of a tetraacyldisaccharide 1-phosphate intermediate (termed DS-1-P) to form tetraacyldisaccharide 1,4'-bis-phosphate (lipid IVA). The polypeptide is Tetraacyldisaccharide 4'-kinase (Shewanella putrefaciens (strain CN-32 / ATCC BAA-453)).